The sequence spans 173 residues: Small ribosomal subunit protein uS5 (173 aa).

Residues 18 to 81 enclose the S5 DRBM domain; the sequence is YVEKLVKLNR…EKAKANMVTF (64 aa).

Belongs to the universal ribosomal protein uS5 family. As to quaternary structure, part of the 30S ribosomal subunit. Contacts proteins S4 and S8.

Functionally, with S4 and S12 plays an important role in translational accuracy. Its function is as follows. Located at the back of the 30S subunit body where it stabilizes the conformation of the head with respect to the body. The protein is Small ribosomal subunit protein uS5 of Treponema denticola (strain ATCC 35405 / DSM 14222 / CIP 103919 / JCM 8153 / KCTC 15104).